The primary structure comprises 213 residues: Dimethylamine corrinoid protein (213 aa).

Residues 1 to 90 form the B12-binding N-terminal domain; sequence MSKEELLQEL…LMPEGASGSK (90 aa). In terms of domain architecture, B12-binding spans 91-213; that stretch reads LGVIVNGTVE…AVAKAKELLA (123 aa). H104 contacts methylcob(III)alamin.

This sequence belongs to the methylamine corrinoid protein family. In terms of assembly, copurifies with MtbA.

The protein operates within one-carbon metabolism; methanogenesis from dimethylamine. Acts as a methyl group carrier between MtbB1 and MtbA. Binds 1 corrinoid cofactor per protein, is subsequently demethylated by MtbA. In Methanosarcina barkeri, this protein is Dimethylamine corrinoid protein.